A 226-amino-acid polypeptide reads, in one-letter code: Lipid phosphate phosphatase gamma (226 aa).

Met-1 carries the N-acetylmethionine modification. 5 helical membrane passes run 24 to 44 (LGHF…GGFV), 52 to 72 (ELQG…NEFI), 102 to 122 (FMFF…GFWF), 128 to 148 (WIMN…RVYL), and 152 to 174 (TVAQ…FWVV).

It belongs to the PA-phosphatase related phosphoesterase family. As to expression, expressed in root tips, root branch points, vascular tissue of cotyledons and leaves, pistil, anthers and filaments.

The protein resides in the plastid. It is found in the chloroplast inner membrane. Inhibited by Mg(2+). Exhibits phosphatidate phosphatase (PAP) activity in vitro. May play a primary role as PAP in plastids. The protein is Lipid phosphate phosphatase gamma (LPPG) of Arabidopsis thaliana (Mouse-ear cress).